Here is a 273-residue protein sequence, read N- to C-terminus: Tyrosinase (273 aa).

Residues 1–18 form the signal peptide; that stretch reads MCLLALGFLLGILQPASG. N-linked (GlcNAc...) asparagine glycosylation is found at asparagine 86 and asparagine 169. Positions 180, 202, and 211 each coordinate Cu cation. A glycan (N-linked (GlcNAc...) asparagine) is linked at asparagine 230.

Belongs to the tyrosinase family. It depends on Cu(2+) as a cofactor.

It localises to the melanosome membrane. It carries out the reaction 2 L-dopa + O2 = 2 L-dopaquinone + 2 H2O. It catalyses the reaction L-tyrosine + O2 = L-dopaquinone + H2O. In terms of biological role, this is a copper-containing oxidase that functions in the formation of pigments such as melanins and other polyphenolic compounds. The protein is Tyrosinase (TYR) of Pelodiscus sinensis (Chinese softshell turtle).